Consider the following 371-residue polypeptide: 4-hydroxy-3-methylbut-2-en-1-yl diphosphate synthase (flavodoxin) (371 aa).

[4Fe-4S] cluster contacts are provided by Cys269, Cys272, Cys304, and Glu311.

It belongs to the IspG family. The cofactor is [4Fe-4S] cluster.

The enzyme catalyses (2E)-4-hydroxy-3-methylbut-2-enyl diphosphate + oxidized [flavodoxin] + H2O + 2 H(+) = 2-C-methyl-D-erythritol 2,4-cyclic diphosphate + reduced [flavodoxin]. It participates in isoprenoid biosynthesis; isopentenyl diphosphate biosynthesis via DXP pathway; isopentenyl diphosphate from 1-deoxy-D-xylulose 5-phosphate: step 5/6. Its function is as follows. Converts 2C-methyl-D-erythritol 2,4-cyclodiphosphate (ME-2,4cPP) into 1-hydroxy-2-methyl-2-(E)-butenyl 4-diphosphate. This Acinetobacter baylyi (strain ATCC 33305 / BD413 / ADP1) protein is 4-hydroxy-3-methylbut-2-en-1-yl diphosphate synthase (flavodoxin).